Here is a 361-residue protein sequence, read N- to C-terminus: Peptide chain release factor 1 (361 aa).

Residue Gln237 is modified to N5-methylglutamine. Residues 287–306 (KRAAEEASTRKSLVGSGDRS) are disordered.

Belongs to the prokaryotic/mitochondrial release factor family. Post-translationally, methylated by PrmC. Methylation increases the termination efficiency of RF1.

The protein resides in the cytoplasm. Functionally, peptide chain release factor 1 directs the termination of translation in response to the peptide chain termination codons UAG and UAA. This chain is Peptide chain release factor 1, found in Alteromonas mediterranea (strain DSM 17117 / CIP 110805 / LMG 28347 / Deep ecotype).